A 615-amino-acid polypeptide reads, in one-letter code: Nuclear receptor subfamily 1 group D member 1 (615 aa).

The segment covering 1–12 has biased composition (polar residues); that stretch reads MTTLDSNNNTGG. A required for phosphorylation by CSNK1E and cytoplasmic localization region spans residues 1–70; that stretch reads MTTLDSNNNT…TQDPARSFGS (70 aa). The interval 1–120 is disordered; that stretch reads MTTLDSNNNT…SSRVSPSKGT (120 aa). The modulating stretch occupies residues 1–129; sequence MTTLDSNNNT…TSNITKLNGM (129 aa). Positions 14 to 34 are enriched in low complexity; that stretch reads ITYIGSSGSSPSRTSPESLYS. Polar residues predominate over residues 35-48; that stretch reads DSSNGSFQSLTQGC. Positions 49–285 are crucial for activation of GJA1; it reads PTYFPPSPTG…PPRSPSPEPT (237 aa). 2 positions are modified to phosphoserine; by GSK3-beta: S55 and S59. Over residues 70–94 the composition is skewed to low complexity; that stretch reads SAPPSLSDDSSPSSASSSSSSSSSS. A DNA-binding region (nuclear receptor) is located at residues 130 to 206; the sequence is VLLCKVCGDV…VGMSRDAVRF (77 aa). 2 NR C4-type zinc fingers span residues 133-153 and 170-194; these read CKVCGDVASGFHYGVHACEGC and CLKNENCSIVRINRNRCQQCRFKKC. An N6-acetyllysine; by KAT5 mark is found at K192 and K193. Disordered regions lie at residues 235–286 and 312–337; these read LCPL…EPTM and PGNFNANHASGSPSATTPHRWESQGC. Over residues 240–252 the composition is skewed to low complexity; sequence TSPTPHPTSGSMG. Positions 253–262 are enriched in pro residues; it reads PSPPPAPAPT. T275 carries the phosphothreonine; by CDK1 modification. Residues 285-615 form the NR LBD domain; sequence TMEDVISQVA…KLLSFRVDAQ (331 aa). The span at 312-328 shows a compositional bias: polar residues; the sequence is PGNFNANHASGSPSATT. Residue C419 participates in heme binding. An N6-acetyllysine modification is found at K592. Residue H603 participates in heme binding.

The protein belongs to the nuclear hormone receptor family. NR1 subfamily. As to quaternary structure, binds DNA as a monomer or a homodimer. Interacts with NR2E3 and ZNHIT1. Interacts with C1D. Interacts with SP1. Interacts with OPHN1 (via C-terminus). Interacts with PER2; the interaction associates PER2 to BMAL1 promoter region. Interacts with CRY1. Interacts with CCAR2. Interacts with SIAH2. Interacts with FBXW7 and CDK1. Interacts with HUWE1. Interacts with NR0B2. Interacts with NFIL3. Interacts (via domain NR LBD) with HSP90AA1 and HSP90AB1. In terms of processing, ubiquitinated, leading to its proteasomal degradation. Ubiquitinated by the SCF(FBXW7) complex when phosphorylated by CDK1 leading to its proteasomal degradation. Ubiquitinated by SIAH2; leading to its proteasomal degradation. Rapidly ubiquitinated in response to inflammatory triggers and sumoylation is a prerequisite to its ubiquitination. Sumoylated by UBE2I, desumoylated by SENP1, and sumoylation is a prerequisite to its ubiquitination. Post-translationally, phosphorylated by CSNK1E; phosphorylation enhances its cytoplasmic localization. In terms of processing, undergoes lysosome-mediated degradation in a time-dependent manner in the liver. As to expression, expressed during adipocyte differentiation (at protein level). Expressed in skeletal muscle, bladder, lumbar spinal cord, pancreatic islets and hypothalamus. Expressed in developing and adult retina. In the adult retina, predominantly expressed in the outer nuclear layer, where rod and cone cells reside, and also localized to the ganglion cell layer. Expressed in a circadian manner in the liver. Expressed in a circadian manner in the lung with a peak between ZT8 and ZT12.

The protein localises to the nucleus. Its subcellular location is the cytoplasm. It is found in the cell projection. The protein resides in the dendrite. It localises to the dendritic spine. Transcriptional repressor which coordinates circadian rhythm and metabolic pathways in a heme-dependent manner. Integral component of the complex transcription machinery that governs circadian rhythmicity and forms a critical negative limb of the circadian clock by directly repressing the expression of core clock components BMAL1, CLOCK and CRY1. Also regulates genes involved in metabolic functions, including lipid and bile acid metabolism, adipogenesis, gluconeogenesis and the macrophage inflammatory response. Acts as a receptor for heme which stimulates its interaction with the NCOR1/HDAC3 corepressor complex, enhancing transcriptional repression. Recognizes two classes of DNA response elements within the promoter of its target genes and can bind to DNA as either monomers or homodimers, depending on the nature of the response element. Binds as a monomer to a response element composed of the consensus half-site motif 5'-[A/G]GGTCA-3' preceded by an A/T-rich 5' sequence (RevRE), or as a homodimer to a direct repeat of the core motif spaced by two nucleotides (RevDR-2). Acts as a potent competitive repressor of ROR alpha (RORA) function and regulates the levels of its ligand heme by repressing the expression of PPARGC1A, a potent inducer of heme synthesis. Regulates lipid metabolism by repressing the expression of APOC3 and by influencing the activity of sterol response element binding proteins (SREBPs); represses INSIG2 which interferes with the proteolytic activation of SREBPs which in turn govern the rhythmic expression of enzymes with key functions in sterol and fatty acid synthesis. Regulates gluconeogenesis via repression of G6PC1 and PEPCK and adipocyte differentiation via repression of PPARG. Regulates glucagon release in pancreatic alpha-cells via the AMPK-NAMPT-SIRT1 pathway and the proliferation, glucose-induced insulin secretion and expression of key lipogenic genes in pancreatic-beta cells. Positively regulates bile acid synthesis by increasing hepatic expression of CYP7A1 via repression of NR0B2 and NFIL3 which are negative regulators of CYP7A1. Modulates skeletal muscle oxidative capacity by regulating mitochondrial biogenesis and autophagy; controls mitochondrial biogenesis and respiration by interfering with the STK11-PRKAA1/2-SIRT1-PPARGC1A signaling pathway. Represses the expression of SERPINE1/PAI1, an important modulator of cardiovascular disease and the expression of inflammatory cytokines and chemokines in macrophages. Represses gene expression at a distance in macrophages by inhibiting the transcription of enhancer-derived RNAs (eRNAs). Plays a role in the circadian regulation of body temperature and negatively regulates thermogenic transcriptional programs in brown adipose tissue (BAT); imposes a circadian oscillation in BAT activity, increasing body temperature when awake and depressing thermogenesis during sleep. In concert with NR2E3, regulates transcriptional networks critical for photoreceptor development and function. In addition to its activity as a repressor, can also act as a transcriptional activator. In the ovarian granulosa cells acts as a transcriptional activator of STAR which plays a role in steroid biosynthesis. In collaboration with SP1, activates GJA1 transcription in a heme-independent manner. Represses the transcription of CYP2B10, CYP4A10 and CYP4A14. Represses the transcription of CES2. Represses and regulates the circadian expression of TSHB in a NCOR1-dependent manner. Negatively regulates the protein stability of NR3C1 and influences the time-dependent subcellular distribution of NR3C1, thereby affecting its transcriptional regulatory activity. Plays a critical role in the circadian control of neutrophilic inflammation in the lung; under resting, non-stress conditions, acts as a rhythmic repressor to limit inflammatory activity whereas in the presence of inflammatory triggers undergoes ubiquitin-mediated degradation thereby relieving inhibition of the inflammatory response. Plays a key role in the circadian regulation of microglial activation and neuroinflammation; suppresses microglial activation through the NF-kappaB pathway in the central nervous system. Plays a role in the regulation of the diurnal rhythms of lipid and protein metabolism in the skeletal muscle via transcriptional repression of genes controlling lipid and amino acid metabolism in the muscle. This chain is Nuclear receptor subfamily 1 group D member 1 (Nr1d1), found in Mus musculus (Mouse).